The sequence spans 387 residues: Odorant receptor 94a (387 aa).

Over 1–45 the chain is Cytoplasmic; the sequence is MDKHKDRIESMRLILQVMQLFGLWPWSLKSEEEWTFTGFVKRNYR. The chain crosses the membrane as a helical span at residues 46-66; it reads FLLHLPITFTFIGLMWLEAFI. At 67-75 the chain is on the extracellular side; it reads SSNLEQAGQ. The chain crosses the membrane as a helical span at residues 76–96; sequence VLYMSITEMALVVKILSIWHY. The Cytoplasmic segment spans residues 97–133; the sequence is RTEAWRLMYELQHAPDYQLHNQEEVDFWRREQRFFKW. Residues 134 to 154 traverse the membrane as a helical segment; that stretch reads FFYIYILISLGVVYSGCTGVL. The Extracellular segment spans residues 155–191; the sequence is FLEGYELPFAYYVPFEWQNERRYWFAYGYDMAGMTLT. The chain crosses the membrane as a helical span at residues 192 to 212; that stretch reads CISNITLDTLGCYFLFHISLL. Residues 213-255 are Cytoplasmic-facing; sequence YRLLGLRLRETKNMKNDTIFGQQLRAIFIMHQRIRSLTLTCQR. The helical transmembrane segment at 256 to 276 threads the bilayer; the sequence is IVSPYILSQIILSALIICFSG. The Extracellular segment spans residues 277 to 290; it reads YRLQHVGIRDNPGQ. Residues 291–311 traverse the membrane as a helical segment; sequence FISMLQFVSVMILQIYLPCYY. At 312–362 the chain is on the cytoplasmic side; it reads GNEITVYANQLTNEVYHTNWLECRPPIRKLLNAYMEHLKKPVTIRAGNFFA. Residues 363–383 traverse the membrane as a helical segment; that stretch reads VGLPIFVKTINNAYSFLALLL. N-linked (GlcNAc...) asparagine glycosylation is present at Asn-384. Topologically, residues 384 to 387 are extracellular; sequence NVSN.

It belongs to the insect chemoreceptor superfamily. Heteromeric odorant receptor channel (TC 1.A.69) family. Or2a subfamily. As to quaternary structure, interacts with Orco. Complexes exist early in the endomembrane system in olfactory sensory neurons (OSNs), coupling these complexes to the conserved ciliary trafficking pathway.

Its subcellular location is the cell membrane. In terms of biological role, odorant receptor which mediates acceptance or avoidance behavior, depending on its substrates. The odorant receptor repertoire encodes a large collection of odor stimuli that vary widely in identity, intensity, and duration. May form a complex with Orco to form odorant-sensing units, providing sensitive and prolonged odorant signaling and calcium permeability. The sequence is that of Odorant receptor 94a (Or94a) from Drosophila melanogaster (Fruit fly).